A 469-amino-acid polypeptide reads, in one-letter code: ATP-dependent protease ATPase subunit HslU (469 aa).

ATP is bound by residues Ile24, 66 to 71, Asp282, Glu347, and Arg419; that span reads GVGKTE.

Belongs to the ClpX chaperone family. HslU subfamily. In terms of assembly, a double ring-shaped homohexamer of HslV is capped on each side by a ring-shaped HslU homohexamer. The assembly of the HslU/HslV complex is dependent on binding of ATP.

It is found in the cytoplasm. In terms of biological role, ATPase subunit of a proteasome-like degradation complex; this subunit has chaperone activity. The binding of ATP and its subsequent hydrolysis by HslU are essential for unfolding of protein substrates subsequently hydrolyzed by HslV. HslU recognizes the N-terminal part of its protein substrates and unfolds these before they are guided to HslV for hydrolysis. The protein is ATP-dependent protease ATPase subunit HslU of Listeria monocytogenes serotype 4a (strain HCC23).